The chain runs to 387 residues: Patatin-13 (387 aa).

The first 23 residues, 1–23 (MATTKSVLVLIFMILATTSSTFA), serve as a signal peptide directing secretion. The region spanning 32-230 (LSVDGGGIKG…TVADPALLSV (199 aa)) is the PNPLA domain. A GXGXXG motif is present at residues 36-41 (GGGIKG). Positions 75 to 79 (GTSTG) match the GXSXG motif. The Nucleophile role is filled by Ser77. 2 N-linked (GlcNAc...) asparagine glycosylation sites follow: Asn115 and Asn203. Asp216 acts as the Proton acceptor in catalysis. The DGA/G signature appears at 216-218 (DGA). The stretch at 361-385 (ETYEEALKRFAKLLSDRKKLRANKA) forms a coiled coil.

It belongs to the patatin family. As to expression, tuber.

The protein resides in the vacuole. Probable lipolytic acyl hydrolase (LAH), an activity which is thought to be involved in the response of tubers to pathogens. This chain is Patatin-13, found in Solanum tuberosum (Potato).